The sequence spans 498 residues: Transcription factor bHLH78 (498 aa).

Disordered stretches follow at residues 1-24 (MDNE…FEHQ) and 207-297 (LVSP…PPKD). A compositionally biased stretch (polar residues) spans 233–246 (NPISTASPSPSFSK). A compositionally biased stretch (basic and acidic residues) spans 259 to 270 (SSEEKGGKRRRE). Acidic residues predominate over residues 271–281 (EEDDEEEEGEG). Positions 307–357 (QATDSHSLAERVRREKIGERMKLLQDLVPGCNKVTGKALMLDEIINYVQSL) constitute a bHLH domain.

Homodimer. Binds reversibly to CRY2 after blue light illumination. As to expression, expressed constitutively in roots, leaves, stems, and flowers.

It localises to the nucleus. In terms of biological role, transcription factor that binds DNA to G box 5'-CACGTG-3' and to E-box 5'-CANNTG-3'. Binds to chromatin DNA of the FT gene and promotes its expression, and thus triggers flowering in response to blue light. The protein is Transcription factor bHLH78 (BHLH78) of Arabidopsis thaliana (Mouse-ear cress).